The sequence spans 393 residues: S-adenosylmethionine synthase 2 (393 aa).

A Mg(2+)-binding site is contributed by Glu9. His15 is an ATP binding site. Glu43 lines the K(+) pocket. Residues Glu56 and Gln99 each coordinate L-methionine. Residues Asp167–Lys169, Ser235–Phe238, Asp246, Arg252–Lys253, Ala269, Lys273, and Lys277 contribute to the ATP site. Asp246 contacts L-methionine. Residue Lys277 coordinates L-methionine.

The protein belongs to the AdoMet synthase family. As to quaternary structure, homotetramer. Mn(2+) serves as cofactor. Requires Mg(2+) as cofactor. It depends on Co(2+) as a cofactor. The cofactor is K(+). Mostly expressed in roots. Also present in stems and leaves.

It localises to the cytoplasm. The catalysed reaction is L-methionine + ATP + H2O = S-adenosyl-L-methionine + phosphate + diphosphate. Its pathway is amino-acid biosynthesis; S-adenosyl-L-methionine biosynthesis; S-adenosyl-L-methionine from L-methionine: step 1/1. Functionally, catalyzes the formation of S-adenosylmethionine from methionine and ATP. The reaction comprises two steps that are both catalyzed by the same enzyme: formation of S-adenosylmethionine (AdoMet) and triphosphate, and subsequent hydrolysis of the triphosphate. The polypeptide is S-adenosylmethionine synthase 2 (SAM2) (Solanum lycopersicum (Tomato)).